Reading from the N-terminus, the 180-residue chain is Crossover junction endodeoxyribonuclease RuvC (180 aa).

Residues Asp-7, Glu-66, and Asp-138 contribute to the active site. Mg(2+) is bound by residues Asp-7, Glu-66, and Asp-138.

The protein belongs to the RuvC family. As to quaternary structure, homodimer which binds Holliday junction (HJ) DNA. The HJ becomes 2-fold symmetrical on binding to RuvC with unstacked arms; it has a different conformation from HJ DNA in complex with RuvA. In the full resolvosome a probable DNA-RuvA(4)-RuvB(12)-RuvC(2) complex forms which resolves the HJ. It depends on Mg(2+) as a cofactor.

Its subcellular location is the cytoplasm. The enzyme catalyses Endonucleolytic cleavage at a junction such as a reciprocal single-stranded crossover between two homologous DNA duplexes (Holliday junction).. In terms of biological role, the RuvA-RuvB-RuvC complex processes Holliday junction (HJ) DNA during genetic recombination and DNA repair. Endonuclease that resolves HJ intermediates. Cleaves cruciform DNA by making single-stranded nicks across the HJ at symmetrical positions within the homologous arms, yielding a 5'-phosphate and a 3'-hydroxyl group; requires a central core of homology in the junction. The consensus cleavage sequence is 5'-(A/T)TT(C/G)-3'. Cleavage occurs on the 3'-side of the TT dinucleotide at the point of strand exchange. HJ branch migration catalyzed by RuvA-RuvB allows RuvC to scan DNA until it finds its consensus sequence, where it cleaves and resolves the cruciform DNA. This Burkholderia orbicola (strain MC0-3) protein is Crossover junction endodeoxyribonuclease RuvC.